The chain runs to 44 residues: uncharacterized protein (44 aa).

Residues 4-24 traverse the membrane as a helical segment; it reads ISSILIRGGGVLIVVILLLWI.

It is found in the membrane. This is an uncharacterized protein from Ornithodoros (relapsing fever ticks).